A 282-amino-acid polypeptide reads, in one-letter code: Small ribosomal subunit protein uS2 (282 aa).

Residues 260 to 282 (KRRRSKVYKEEEREVVTNEDESR) are disordered. A compositionally biased stretch (basic and acidic residues) spans 266–282 (VYKEEEREVVTNEDESR).

Belongs to the universal ribosomal protein uS2 family.

The polypeptide is Small ribosomal subunit protein uS2 (Wolbachia pipientis wMel).